A 373-amino-acid chain; its full sequence is Enoyl-[acyl-carrier-protein] reductase, mitochondrial (373 aa).

The N-terminal 53 residues, 1 to 53 (MWVCGALCRTRAPAQLGQRLLPESRRRRPASASFSASAEPSRVRALVYGHHGD), are a transit peptide targeting the mitochondrion. Residue K61 is modified to N6-acetyllysine; alternate. An N6-succinyllysine; alternate modification is found at K61. Y94 acts as the Proton donor in catalysis. Residues N167, 193–196 (NSGV), and 216–218 (RDT) each bind NADP(+). 2 positions are modified to N6-acetyllysine; alternate: K252 and K267. N6-succinyllysine; alternate is present on residues K252 and K267. Residues 285–288 (YGGM) and 310–312 (FWL) each bind NADP(+). At K316 the chain carries N6-succinyllysine. K368 provides a ligand contact to NADP(+).

This sequence belongs to the zinc-containing alcohol dehydrogenase family. Quinone oxidoreductase subfamily. Homodimer.

The protein localises to the mitochondrion. It catalyses the reaction a 2,3-saturated acyl-[ACP] + NADP(+) = a (2E)-enoyl-[ACP] + NADPH + H(+). The catalysed reaction is (2E)-butenoyl-[ACP] + NADPH + H(+) = butanoyl-[ACP] + NADP(+). The enzyme catalyses (2E)-hexenoyl-[ACP] + NADPH + H(+) = hexanoyl-[ACP] + NADP(+). It carries out the reaction (2E)-octenoyl-[ACP] + NADPH + H(+) = octanoyl-[ACP] + NADP(+). It catalyses the reaction (2E)-decenoyl-[ACP] + NADPH + H(+) = decanoyl-[ACP] + NADP(+). The catalysed reaction is (2E)-dodecenoyl-[ACP] + NADPH + H(+) = dodecanoyl-[ACP] + NADP(+). The enzyme catalyses (2E)-tetradecenoyl-[ACP] + NADPH + H(+) = tetradecanoyl-[ACP] + NADP(+). It carries out the reaction (2E)-hexadecenoyl-[ACP] + NADPH + H(+) = hexadecanoyl-[ACP] + NADP(+). Functionally, catalyzes the NADPH-dependent reduction of trans-2-enoyl thioesters in mitochondrial fatty acid synthesis (fatty acid synthesis type II). Fatty acid chain elongation in mitochondria uses acyl carrier protein (ACP) as an acyl group carrier, but the enzyme accepts both ACP and CoA thioesters as substrates in vitro. Displays a preference for medium-chain over short- and long-chain substrates. May provide the octanoyl chain used for lipoic acid biosynthesis, regulating protein lipoylation and mitochondrial respiratory activity particularly in Purkinje cells. Involved in iron homeostasis; affecting Fe-S cluster assembly and ceramide metabolism. Required for proper morphology and bioenergetic functions of mitochondria. Required for maintenance of neurons. The polypeptide is Enoyl-[acyl-carrier-protein] reductase, mitochondrial (MECR) (Bos taurus (Bovine)).